The chain runs to 271 residues: ATP synthase subunit a (271 aa).

Helical transmembrane passes span 38–58 (FWTL…LFLV), 100–120 (LIAP…LMDL), 146–166 (DVNI…FYSI), 220–240 (LIFI…LNVP), and 242–262 (AIFH…LTIV).

The protein belongs to the ATPase A chain family. In terms of assembly, F-type ATPases have 2 components, CF(1) - the catalytic core - and CF(0) - the membrane proton channel. CF(1) has five subunits: alpha(3), beta(3), gamma(1), delta(1), epsilon(1). CF(0) has three main subunits: a(1), b(2) and c(9-12). The alpha and beta chains form an alternating ring which encloses part of the gamma chain. CF(1) is attached to CF(0) by a central stalk formed by the gamma and epsilon chains, while a peripheral stalk is formed by the delta and b chains.

It is found in the cell inner membrane. In terms of biological role, key component of the proton channel; it plays a direct role in the translocation of protons across the membrane. This chain is ATP synthase subunit a, found in Salmonella choleraesuis (strain SC-B67).